We begin with the raw amino-acid sequence, 201 residues long: Holliday junction branch migration complex subunit RuvA (201 aa).

Residues 1-64 are domain I; it reads MYEYIRGQFQ…EDFIGLYGFT (64 aa). The interval 65–143 is domain II; that stretch reads TREELEMFKL…PDELTSEEGQ (79 aa). The tract at residues 144 to 152 is flexible linker; it reads LIEGINDNS. Residues 153–201 are domain III; the sequence is DYSFNINETLSALMALGYTEKEAQKALEKVDKTLSIENMIKESLKLLMR.

This sequence belongs to the RuvA family. In terms of assembly, homotetramer. Forms an RuvA(8)-RuvB(12)-Holliday junction (HJ) complex. HJ DNA is sandwiched between 2 RuvA tetramers; dsDNA enters through RuvA and exits via RuvB. An RuvB hexamer assembles on each DNA strand where it exits the tetramer. Each RuvB hexamer is contacted by two RuvA subunits (via domain III) on 2 adjacent RuvB subunits; this complex drives branch migration. In the full resolvosome a probable DNA-RuvA(4)-RuvB(12)-RuvC(2) complex forms which resolves the HJ.

It is found in the cytoplasm. Its function is as follows. The RuvA-RuvB-RuvC complex processes Holliday junction (HJ) DNA during genetic recombination and DNA repair, while the RuvA-RuvB complex plays an important role in the rescue of blocked DNA replication forks via replication fork reversal (RFR). RuvA specifically binds to HJ cruciform DNA, conferring on it an open structure. The RuvB hexamer acts as an ATP-dependent pump, pulling dsDNA into and through the RuvAB complex. HJ branch migration allows RuvC to scan DNA until it finds its consensus sequence, where it cleaves and resolves the cruciform DNA. This chain is Holliday junction branch migration complex subunit RuvA, found in Clostridium perfringens (strain 13 / Type A).